A 387-amino-acid chain; its full sequence is Dual specificity protein phosphatase MPK-4 (387 aa).

Residues 1 to 15 (MEQSQSQRQAWPSSS) are compositionally biased toward polar residues. Positions 1–27 (MEQSQSQRQAWPSSSAGGGKAQDSGVL) are disordered. Residues 35 to 182 (GPVSIDEVDT…LKLFRRMGCK (148 aa)) form the Tyrosine-protein phosphatase domain. The active-site Phosphocysteine intermediate is Cys-126. The segment at 248–267 (LEHKPRDRPPQEVVPKEKEE) is disordered.

It belongs to the protein-tyrosine phosphatase family. Non-receptor class dual specificity subfamily. As to quaternary structure, interacts (via tyrosine-protein phosphatase domain) with bsk/JNK; the interaction dephosphorylates bsk.

It is found in the nucleus. Its subcellular location is the cytoplasm. The enzyme catalyses O-phospho-L-tyrosyl-[protein] + H2O = L-tyrosyl-[protein] + phosphate. The catalysed reaction is O-phospho-L-seryl-[protein] + H2O = L-seryl-[protein] + phosphate. It carries out the reaction O-phospho-L-threonyl-[protein] + H2O = L-threonyl-[protein] + phosphate. With respect to regulation, inhibited by the tyrosine phosphatase inhibitor sodium vanadate. Its function is as follows. Dual specificity phosphatase; can dephosphorylate both phosphotyrosine and phosphoserine or phosphothreonine residues. May suppress bsk/JNK activation during the immune response. The polypeptide is Dual specificity protein phosphatase MPK-4 (Drosophila melanogaster (Fruit fly)).